The chain runs to 203 residues: uncharacterized protein (203 aa).

The protein belongs to the DadA oxidoreductase family.

In terms of biological role, either a functional dehydrogenase or a non-functional fragment. This is an uncharacterized protein from Sinorhizobium fredii (strain NBRC 101917 / NGR234).